The following is a 135-amino-acid chain: Ribosome-binding factor A (135 aa).

Residues 115 to 135 (VNEDKRKQQDSGREEDQAGEE) are disordered. Residues 116-135 (NEDKRKQQDSGREEDQAGEE) are compositionally biased toward basic and acidic residues.

The protein belongs to the RbfA family. In terms of assembly, monomer. Binds 30S ribosomal subunits, but not 50S ribosomal subunits or 70S ribosomes.

Its subcellular location is the cytoplasm. Its function is as follows. One of several proteins that assist in the late maturation steps of the functional core of the 30S ribosomal subunit. Associates with free 30S ribosomal subunits (but not with 30S subunits that are part of 70S ribosomes or polysomes). Required for efficient processing of 16S rRNA. May interact with the 5'-terminal helix region of 16S rRNA. This chain is Ribosome-binding factor A, found in Vibrio campbellii (strain ATCC BAA-1116).